The following is a 141-amino-acid chain: Nucleoside diphosphate kinase (141 aa).

Lysine 11, phenylalanine 59, arginine 87, threonine 93, arginine 104, and asparagine 114 together coordinate ATP. Catalysis depends on histidine 117, which acts as the Pros-phosphohistidine intermediate.

This sequence belongs to the NDK family. As to quaternary structure, homotetramer. The cofactor is Mg(2+).

It localises to the cytoplasm. The enzyme catalyses a 2'-deoxyribonucleoside 5'-diphosphate + ATP = a 2'-deoxyribonucleoside 5'-triphosphate + ADP. It carries out the reaction a ribonucleoside 5'-diphosphate + ATP = a ribonucleoside 5'-triphosphate + ADP. Functionally, major role in the synthesis of nucleoside triphosphates other than ATP. The ATP gamma phosphate is transferred to the NDP beta phosphate via a ping-pong mechanism, using a phosphorylated active-site intermediate. This is Nucleoside diphosphate kinase from Pseudomonas putida (strain W619).